The chain runs to 966 residues: Regulator of G-protein signaling 3 (966 aa).

The PDZ domain maps to 18 to 95 (QITIRRGKDG…EIILLVWRVV (78 aa)). The segment at 115–135 (THDLLSPPNKREKNCTHGAPV) is disordered. R167 bears the Omega-N-methylarginine mark. Disordered stretches follow at residues 403–618 (EADE…TGAV) and 637–704 (YSQL…RVQN). 2 stretches are compositionally biased toward polar residues: residues 527 to 548 (PETS…TELP) and 576 to 594 (SSAS…SSLG). The segment covering 649 to 675 (GEDEDAEEGEEGGEGEEDEEDDTSDDN) has biased composition (acidic residues). A compositionally biased stretch (basic and acidic residues) spans 676–686 (YGDRSEAKRSS). Phosphoserine occurs at positions 712, 715, 747, and 776. Positions 806 to 830 (FRRRNESPGAQPASKTDKTTKSFKP) are disordered. Basic and acidic residues predominate over residues 820 to 830 (KTDKTTKSFKP). The region spanning 841 to 966 (SLEKLLLHKY…INQKKMSPPL (126 aa)) is the RGS domain.

As to quaternary structure, binds the GNB1-GNG2 heterodimer. Binds EFNB1 and EFNB2. In terms of processing, phosphorylated by cyclic GMP-dependent protein kinase. ISGylated. As to expression, detected in embryos from E8.5-16.5 in cortical ventricular zone, dorsal root ganglia and cerebellar primordia. Isoform 3 is detected in testis and in spermatocytes from newborn mice. Levels increase and reach a maximum after 21 days; after this they decrease again. Long isoforms are widely expressed.

It is found in the cytoplasm. The protein resides in the cell membrane. It localises to the nucleus. Functionally, down-regulates signaling from heterotrimeric G-proteins by increasing the GTPase activity of the alpha subunits, thereby driving them into their inactive GDP-bound form. Down-regulates G-protein-mediated release of inositol phosphates and activation of MAP kinases. This chain is Regulator of G-protein signaling 3 (Rgs3), found in Mus musculus (Mouse).